Here is a 503-residue protein sequence, read N- to C-terminus: Variant surface glycoprotein AnTaT 1.1 (503 aa).

The first 29 residues, 1–29, serve as a signal peptide directing secretion; sequence MVTKERNAALKIVMLVASALTLHPQQALA. 2 cysteine pairs are disulfide-bonded: C45–C172 and C154–C209. A glycan (N-linked (GlcNAc...) asparagine) is linked at N113. N-linked (GlcNAc...) asparagine glycosylation is found at N419 and N432. D480 carries GPI-anchor amidated aspartate lipidation. A propeptide spans 481–503 (removed in mature form); that stretch reads SSILLTKNFALSVVSAALVALLF.

The protein resides in the cell membrane. In terms of biological role, VSG forms a coat on the surface of the parasite. The trypanosome evades the immune response of the host by expressing a series of antigenically distinct VSGs from an estimated 1000 VSG genes. The protein is Variant surface glycoprotein AnTaT 1.1 of Trypanosoma brucei brucei.